We begin with the raw amino-acid sequence, 435 residues long: NADH-quinone oxidoreductase subunit D (435 aa).

It belongs to the complex I 49 kDa subunit family. NDH-1 is composed of 14 different subunits. Subunits NuoB, C, D, E, F, and G constitute the peripheral sector of the complex.

Its subcellular location is the cell inner membrane. The catalysed reaction is a quinone + NADH + 5 H(+)(in) = a quinol + NAD(+) + 4 H(+)(out). Its function is as follows. NDH-1 shuttles electrons from NADH, via FMN and iron-sulfur (Fe-S) centers, to quinones in the respiratory chain. The immediate electron acceptor for the enzyme in this species is believed to be ubiquinone. Couples the redox reaction to proton translocation (for every two electrons transferred, four hydrogen ions are translocated across the cytoplasmic membrane), and thus conserves the redox energy in a proton gradient. The chain is NADH-quinone oxidoreductase subunit D from Xylella fastidiosa (strain M23).